Reading from the N-terminus, the 337-residue chain is 4-hydroxyproline 2-epimerase 2 (337 aa).

The active-site Proton acceptor is C90. Substrate-binding positions include 91–92 (GH), H223, and D249. The active-site Proton donor is the C253. 254-255 (GT) is a substrate binding site.

This sequence belongs to the proline racemase family.

The catalysed reaction is trans-4-hydroxy-L-proline = cis-4-hydroxy-D-proline. Its function is as follows. Catalyzes the epimerization of trans-4-hydroxy-L-proline (t4LHyp) to cis-4-hydroxy-D-proline (c4DHyp). Is likely involved in a degradation pathway that converts t4LHyp to alpha-ketoglutarate. Can also catalyze the epimerization of trans-3-hydroxy-L-proline (t3LHyp) to cis-3-hydroxy-D-proline (c3DHyp), albeit with 170-fold lower efficiency. Displays no proline racemase activity. The protein is 4-hydroxyproline 2-epimerase 2 of Brucella anthropi (strain ATCC 49188 / DSM 6882 / CCUG 24695 / JCM 21032 / LMG 3331 / NBRC 15819 / NCTC 12168 / Alc 37) (Ochrobactrum anthropi).